The primary structure comprises 391 residues: D-gluconate/D-galactonate dehydratase (391 aa).

Position 198 (glutamate 198) interacts with Mg(2+). The active-site Proton donor is the histidine 200. Residues glutamate 224 and glutamate 250 each coordinate Mg(2+). Histidine 300 acts as the Proton acceptor in catalysis.

This sequence belongs to the mandelate racemase/muconate lactonizing enzyme family. GaD subfamily. In terms of assembly, homooctamer. It depends on Mg(2+) as a cofactor.

The enzyme catalyses D-gluconate = 2-dehydro-3-deoxy-D-gluconate + H2O. The catalysed reaction is D-galactonate = 2-dehydro-3-deoxy-D-galactonate + H2O. It functions in the pathway carbohydrate acid metabolism; D-gluconate degradation. In terms of biological role, involved in the degradation of glucose and galactose via the nonphosphorylative variant of Entner-Doudoroff pathway. Catalyzes the dehydration of gluconate to produce 2-keto-3-deoxygluconate (KDG). It is also able to catalyze the dehydration of galactonate to produce 2-keto-3-deoxygalactonate (KDGal). The chain is D-gluconate/D-galactonate dehydratase from Picrophilus torridus (strain ATCC 700027 / DSM 9790 / JCM 10055 / NBRC 100828 / KAW 2/3).